The primary structure comprises 432 residues: Pachytene checkpoint protein 2 homolog (432 aa).

Methionine 1 is modified (N-acetylmethionine). Position 179–186 (179–186 (GPPGTGKT)) interacts with ATP.

This sequence belongs to the AAA ATPase family. PCH2 subfamily. As to quaternary structure, specifically interacts with the ligand binding domain of the thyroid receptor (TR). This interaction does not require the presence of thyroid hormone for its interaction. Interacts with proteasome subunit PSMA8; to participate in meiosis progression during spermatogenesis. As to expression, widely expressed, including in testis.

Its function is as follows. Plays a key role in chromosome recombination and chromosome structure development during meiosis. Required at early steps in meiotic recombination that leads to non-crossovers pathways. Also needed for efficient completion of homologous synapsis by influencing crossover distribution along the chromosomes affecting both crossovers and non-crossovers pathways. Also required for development of higher-order chromosome structures and is needed for synaptonemal-complex formation. In males, required for efficient synapsis of the sex chromosomes and for sex body formation. Promotes early steps of the DNA double-strand breaks (DSBs) repair process upstream of the assembly of RAD51 complexes. Required for depletion of HORMAD1 and HORMAD2 from synapsed chromosomes. Plays a role in mitotic spindle assembly checkpoint (SAC) activation. The protein is Pachytene checkpoint protein 2 homolog (Trip13) of Mus musculus (Mouse).